The sequence spans 306 residues: Dirigent protein 24 (306 aa).

Residues 1–21 form the signal peptide; the sequence is MAKALSLTIFLFLLIASNVQS. Residues 36 to 61 form a disordered region; sequence PQVPEEEDDSPQAVTTTPTPIPLPGP.

It belongs to the plant dirigent protein family. As to quaternary structure, homodimer.

Its subcellular location is the secreted. It is found in the extracellular space. The protein resides in the apoplast. Functionally, dirigent proteins impart stereoselectivity on the phenoxy radical-coupling reaction, yielding optically active lignans from two molecules of coniferyl alcohol in the biosynthesis of lignans, flavonolignans, and alkaloids and thus plays a central role in plant secondary metabolism. In Arabidopsis thaliana (Mouse-ear cress), this protein is Dirigent protein 24 (DIR24).